We begin with the raw amino-acid sequence, 90 residues long: Co-chaperonin GroES (90 aa).

Belongs to the GroES chaperonin family. In terms of assembly, heptamer of 7 subunits arranged in a ring. Interacts with the chaperonin GroEL.

It localises to the cytoplasm. Its function is as follows. Together with the chaperonin GroEL, plays an essential role in assisting protein folding. The GroEL-GroES system forms a nano-cage that allows encapsulation of the non-native substrate proteins and provides a physical environment optimized to promote and accelerate protein folding. GroES binds to the apical surface of the GroEL ring, thereby capping the opening of the GroEL channel. This chain is Co-chaperonin GroES, found in Fusobacterium nucleatum subsp. nucleatum (strain ATCC 25586 / DSM 15643 / BCRC 10681 / CIP 101130 / JCM 8532 / KCTC 2640 / LMG 13131 / VPI 4355).